Here is a 624-residue protein sequence, read N- to C-terminus: Bifunctional protein ArgH (624 aa).

The argininosuccinate lyase stretch occupies residues 1-466 (MALWGGRFSQ…QERDNAGVKV (466 aa)). The 151-residue stretch at 464–614 (VKVRPARLTD…DEVALEVNLQ (151 aa)) folds into the N-acetyltransferase domain. The probable acetyltransferase stretch occupies residues 467 to 624 (RPARLTDLDA…EQVIIKSSVA (158 aa)).

It in the N-terminal section; belongs to the lyase 1 family. Argininosuccinate lyase subfamily.

It is found in the cytoplasm. The catalysed reaction is 2-(N(omega)-L-arginino)succinate = fumarate + L-arginine. It participates in amino-acid biosynthesis; L-arginine biosynthesis; L-arginine from L-ornithine and carbamoyl phosphate: step 3/3. This chain is Bifunctional protein ArgH (argH), found in Aliivibrio fischeri (strain ATCC 700601 / ES114) (Vibrio fischeri).